A 357-amino-acid chain; its full sequence is DNA replication and repair protein RecF (357 aa).

An ATP-binding site is contributed by 31-38 (GQNGAGKT).

Belongs to the RecF family.

It is found in the cytoplasm. The RecF protein is involved in DNA metabolism; it is required for DNA replication and normal SOS inducibility. RecF binds preferentially to single-stranded, linear DNA. It also seems to bind ATP. This chain is DNA replication and repair protein RecF, found in Coxiella burnetii (strain Dugway 5J108-111).